The chain runs to 274 residues: NAD kinase (274 aa).

The Proton acceptor role is filled by D60. Residues 60 to 61 (DG), K65, 127 to 128 (NE), and R152 each bind NAD(+).

This sequence belongs to the NAD kinase family. Requires a divalent metal cation as cofactor.

It is found in the cytoplasm. It carries out the reaction NAD(+) + ATP = ADP + NADP(+) + H(+). Functionally, involved in the regulation of the intracellular balance of NAD and NADP, and is a key enzyme in the biosynthesis of NADP. Catalyzes specifically the phosphorylation on 2'-hydroxyl of the adenosine moiety of NAD to yield NADP. The polypeptide is NAD kinase (Mycoplasmoides gallisepticum (strain R(low / passage 15 / clone 2)) (Mycoplasma gallisepticum)).